The primary structure comprises 138 residues: Phosphoribosyl-AMP cyclohydrolase (138 aa).

D84 is a Mg(2+) binding site. Zn(2+) is bound at residue C85. The Mg(2+) site is built by D86 and D88. Zn(2+)-binding residues include C102 and C109.

This sequence belongs to the PRA-CH family. Homodimer. Mg(2+) serves as cofactor. The cofactor is Zn(2+).

The protein localises to the cytoplasm. The catalysed reaction is 1-(5-phospho-beta-D-ribosyl)-5'-AMP + H2O = 1-(5-phospho-beta-D-ribosyl)-5-[(5-phospho-beta-D-ribosylamino)methylideneamino]imidazole-4-carboxamide. Its pathway is amino-acid biosynthesis; L-histidine biosynthesis; L-histidine from 5-phospho-alpha-D-ribose 1-diphosphate: step 3/9. Catalyzes the hydrolysis of the adenine ring of phosphoribosyl-AMP. The polypeptide is Phosphoribosyl-AMP cyclohydrolase (Burkholderia ambifaria (strain ATCC BAA-244 / DSM 16087 / CCUG 44356 / LMG 19182 / AMMD) (Burkholderia cepacia (strain AMMD))).